The chain runs to 205 residues: Probable GTP-binding protein EngB (205 aa).

The EngB-type G domain occupies 27 to 201; that stretch reads TGIEIAFAGR…AAKLDFWFSP (175 aa). GTP is bound by residues 35–42, 62–66, 80–83, 147–150, and 180–182; these read GRSNAGKS, GRTQL, DLPG, TKAD, and FSA. Mg(2+) contacts are provided by S42 and T64.

The protein belongs to the TRAFAC class TrmE-Era-EngA-EngB-Septin-like GTPase superfamily. EngB GTPase family. Mg(2+) serves as cofactor.

Its function is as follows. Necessary for normal cell division and for the maintenance of normal septation. This is Probable GTP-binding protein EngB from Haemophilus influenzae (strain PittEE).